Reading from the N-terminus, the 170-residue chain is Co-chaperone protein HscB homolog (170 aa).

In terms of domain architecture, J spans 5 to 79 (DHFSLFGLPT…RARYLCEQAG (75 aa)).

Belongs to the HscB family. Interacts with HscA and stimulates its ATPase activity.

Functionally, co-chaperone involved in the maturation of iron-sulfur cluster-containing proteins. Seems to help targeting proteins to be folded toward HscA. The polypeptide is Co-chaperone protein HscB homolog (Bordetella bronchiseptica (strain ATCC BAA-588 / NCTC 13252 / RB50) (Alcaligenes bronchisepticus)).